We begin with the raw amino-acid sequence, 279 residues long: Oxygen-dependent coproporphyrinogen-III oxidase (279 aa).

Substrate is bound at residue Ser-102. The a divalent metal cation site is built by His-106 and His-116. The active-site Proton donor is His-116. 118 to 120 provides a ligand contact to substrate; the sequence is NTR. A divalent metal cation-binding residues include His-149 and His-179. An important for dimerization region spans residues 244–279; that stretch reads YVEFNLLYDRGTKFGLMTDGNVEAILMSLPPEVKFN.

It belongs to the aerobic coproporphyrinogen-III oxidase family. Homodimer. A divalent metal cation is required as a cofactor.

The protein resides in the cytoplasm. The enzyme catalyses coproporphyrinogen III + O2 + 2 H(+) = protoporphyrinogen IX + 2 CO2 + 2 H2O. The protein operates within porphyrin-containing compound metabolism; protoporphyrin-IX biosynthesis; protoporphyrinogen-IX from coproporphyrinogen-III (O2 route): step 1/1. In terms of biological role, involved in the heme biosynthesis. Catalyzes the aerobic oxidative decarboxylation of propionate groups of rings A and B of coproporphyrinogen-III to yield the vinyl groups in protoporphyrinogen-IX. The protein is Oxygen-dependent coproporphyrinogen-III oxidase of Rickettsia conorii (strain ATCC VR-613 / Malish 7).